The following is a 453-amino-acid chain: Serine/threonine-protein phosphatase 2A 55 kDa regulatory subunit B delta isoform (453 aa).

WD repeat units lie at residues 32 to 71, 97 to 138, 181 to 219, and 230 to 270; these read AEADIISTVEFNYSGDLLATGDKGGRVVIFQREQENKGRA, EIEE…KRAE, AHTYHINSISVNSDHETYLSADDLRINLWHLEITDRSFN, and ELTE…LCDR. S285 bears the Phosphoserine mark. WD repeat units lie at residues 289–327, 344–385, and 420–452; these read EIISSISDVKFSHSGRYMMTRDYLSVKVWDLNMEGRPVE, ENDC…DVTL, and DFNKKILHTAWHPMESIIAVAATNNLYIFQDKI. Y305 carries the phosphotyrosine modification. Position 308 is a phosphothreonine (T308).

It belongs to the phosphatase 2A regulatory subunit B family. In terms of assembly, PP2A consists of a common heterodimeric core enzyme, composed of a 36 kDa catalytic subunit (subunit C) and a 65 kDa constant regulatory subunit (PR65 or subunit A), that associates with a variety of regulatory subunits. Proteins that associate with the core dimer include three families of regulatory subunits B (the R2/B/PR55/B55, R3/B''/PR72/PR130/PR59 and R5/B'/B56 families), the 48 kDa variable regulatory subunit, viral proteins, and cell signaling molecules. Interacts with IER5.

It is found in the cytoplasm. Substrate-recognition subunit of protein phosphatase 2A (PP2A) that plays a key role in cell cycle by controlling mitosis entry and exit. Involved in chromosome clustering during late mitosis by mediating dephosphorylation of MKI67. The activity of PP2A complexes containing PPP2R2D (PR55-delta) fluctuate during the cell cycle: the activity is high in interphase and low in mitosis. This is Serine/threonine-protein phosphatase 2A 55 kDa regulatory subunit B delta isoform from Mus musculus (Mouse).